Here is a 448-residue protein sequence, read N- to C-terminus: DNA repair protein RadA (448 aa).

The segment at 10 to 27 (CQHCGFTSPKWLGKCVQC) adopts a C4-type zinc-finger fold. 96-103 (GSPGVGKS) contributes to the ATP binding site. Residues 253–257 (KNRFG) carry the RadA KNRFG motif motif. Positions 351 to 448 (DVFINVSGGI…NAVGKIVEWM (98 aa)) are lon-protease-like.

The protein belongs to the RecA family. RadA subfamily.

Functionally, DNA-dependent ATPase involved in processing of recombination intermediates, plays a role in repairing DNA breaks. Stimulates the branch migration of RecA-mediated strand transfer reactions, allowing the 3' invading strand to extend heteroduplex DNA faster. Binds ssDNA in the presence of ADP but not other nucleotides, has ATPase activity that is stimulated by ssDNA and various branched DNA structures, but inhibited by SSB. Does not have RecA's homology-searching function. The polypeptide is DNA repair protein RadA (Helicobacter pylori (strain ATCC 700392 / 26695) (Campylobacter pylori)).